The chain runs to 101 residues: Large ribosomal subunit protein eL21 (101 aa).

Over residues 1-18 (MVKHSRGYRTRSRSLLRK) the composition is skewed to basic residues. The tract at residues 1–23 (MVKHSRGYRTRSRSLLRKSPRER) is disordered.

The protein belongs to the eukaryotic ribosomal protein eL21 family.

The protein is Large ribosomal subunit protein eL21 of Saccharolobus islandicus (strain Y.G.57.14 / Yellowstone #1) (Sulfolobus islandicus).